A 153-amino-acid chain; its full sequence is Protein eva-1 homolog A (153 aa).

A helical transmembrane segment spans residues 37 to 57 (ALYFVCGVCLGLVLTLIALVV). The disordered stretch occupies residues 66–97 (KTQQAPKKTGKTVENTSDTSDSDSDWDNTSDL).

This sequence belongs to the EVA1 family.

It localises to the endoplasmic reticulum membrane. It is found in the lysosome membrane. Its function is as follows. Acts as a regulator of programmed cell death, mediating both autophagy and apoptosis. The protein is Protein eva-1 homolog A (Eva1a) of Danio rerio (Zebrafish).